The sequence spans 194 residues: Probable thymidylate kinase (194 aa).

An ATP-binding site is contributed by 7-14; sequence GIDGSGKT.

The protein belongs to the thymidylate kinase family.

The catalysed reaction is dTMP + ATP = dTDP + ADP. This Methanothermobacter thermautotrophicus (strain ATCC 29096 / DSM 1053 / JCM 10044 / NBRC 100330 / Delta H) (Methanobacterium thermoautotrophicum) protein is Probable thymidylate kinase (tmk).